The chain runs to 205 residues: Probable GTP-binding protein EngB (205 aa).

The 188-residue stretch at 8-195 (RDAEVVLIGR…NEAVRHHLHE (188 aa)) folds into the EngB-type G domain. GTP contacts are provided by residues 16 to 23 (GRSNVGKS), 41 to 45 (GVTRS), 60 to 63 (DLPG), 140 to 143 (NKMD), and 175 to 177 (ISA). Residues Ser23 and Thr43 each coordinate Mg(2+).

Belongs to the TRAFAC class TrmE-Era-EngA-EngB-Septin-like GTPase superfamily. EngB GTPase family. Requires Mg(2+) as cofactor.

In terms of biological role, necessary for normal cell division and for the maintenance of normal septation. This chain is Probable GTP-binding protein EngB, found in Haloarcula marismortui (strain ATCC 43049 / DSM 3752 / JCM 8966 / VKM B-1809) (Halobacterium marismortui).